A 349-amino-acid chain; its full sequence is Isopentenyl-diphosphate delta-isomerase (349 aa).

5 to 6 (RK) contacts substrate. FMN is bound by residues serine 62, 63 to 65 (AIT), serine 93, and asparagine 122. Residue 93–95 (SQR) participates in substrate binding. Residue glutamine 151 coordinates substrate. Residue glutamate 152 participates in Mg(2+) binding. Residues lysine 183, threonine 213, 259–261 (GIR), and 280–281 (AL) contribute to the FMN site.

The protein belongs to the IPP isomerase type 2 family. Homooctamer. Dimer of tetramers. It depends on FMN as a cofactor. NADPH serves as cofactor. The cofactor is Mg(2+).

Its subcellular location is the cytoplasm. The enzyme catalyses isopentenyl diphosphate = dimethylallyl diphosphate. Its function is as follows. Involved in the biosynthesis of isoprenoids. Catalyzes the 1,3-allylic rearrangement of the homoallylic substrate isopentenyl (IPP) to its allylic isomer, dimethylallyl diphosphate (DMAPP). This Methanothermobacter thermautotrophicus (strain ATCC 29096 / DSM 1053 / JCM 10044 / NBRC 100330 / Delta H) (Methanobacterium thermoautotrophicum) protein is Isopentenyl-diphosphate delta-isomerase.